A 256-amino-acid chain; its full sequence is Ras-related protein RabJ (256 aa).

16–23 (GSSDVGKT) provides a ligand contact to GTP. The Effector region signature appears at 38–46 (LTSTIGASF). GTP-binding positions include 64–68 (DSAGQ) and 122–125 (NKID). The tract at residues 229–256 (NGHLQGSINGHNNQNSTNYSDNSDQCCG) is disordered. Positions 230–256 (GHLQGSINGHNNQNSTNYSDNSDQCCG) are enriched in polar residues. 2 S-geranylgeranyl cysteine lipidation sites follow: cysteine 254 and cysteine 255.

It belongs to the small GTPase superfamily. Rab family.

Its subcellular location is the cell membrane. This chain is Ras-related protein RabJ (rabJ), found in Dictyostelium discoideum (Social amoeba).